The chain runs to 231 residues: Probable transglycosylase SceD (231 aa).

Positions 1–27 are cleaved as a signal peptide; it reads MKKTLLASSLAVGLGIVAGNAGHEAHA. Positions 93 to 116 are enriched in polar residues; sequence SAQAPATNNVEPSAVQANQVQSQE. A disordered region spans residues 93 to 152; the sequence is SAQAPATNNVEPSAVQANQVQSQEVEAPQNAQTQQPQASTSNNSQVTATPTESKASEGSS. Residues 119–137 show a composition bias toward low complexity; it reads APQNAQTQQPQASTSNNSQ. The segment covering 138–152 has biased composition (polar residues); that stretch reads VTATPTESKASEGSS.

This sequence belongs to the transglycosylase family. SceD subfamily.

Its subcellular location is the secreted. Its function is as follows. Is able to cleave peptidoglycan and affects clumping and separation of bacterial cells. In Staphylococcus aureus (strain Mu3 / ATCC 700698), this protein is Probable transglycosylase SceD (sceD).